A 372-amino-acid chain; its full sequence is N-methyl-L-tryptophan oxidase (372 aa).

Position 4 to 34 (4 to 34 (DLIIIGSGSVGAAAGYYATRAGLNVLMTDAH)) interacts with FAD. An S-8alpha-FAD cysteine modification is found at C308.

This sequence belongs to the MSOX/MTOX family. MTOX subfamily. Monomer. FAD is required as a cofactor.

The catalysed reaction is N(alpha)-methyl-L-tryptophan + O2 + H2O = L-tryptophan + formaldehyde + H2O2. Catalyzes the oxidative demethylation of N-methyl-L-tryptophan. In Escherichia coli (strain K12 / DH10B), this protein is N-methyl-L-tryptophan oxidase.